We begin with the raw amino-acid sequence, 255 residues long: Type III pantothenate kinase (255 aa).

6–13 serves as a coordination point for ATP; that stretch reads DVGNTNTV. Substrate is bound by residues Tyr100 and 107-110; that span reads GADR. Asp109 acts as the Proton acceptor in catalysis. A K(+)-binding site is contributed by Asp129. Residue Thr132 participates in ATP binding. Residue Thr184 coordinates substrate.

The protein belongs to the type III pantothenate kinase family. Homodimer. It depends on NH4(+) as a cofactor. The cofactor is K(+).

Its subcellular location is the cytoplasm. It carries out the reaction (R)-pantothenate + ATP = (R)-4'-phosphopantothenate + ADP + H(+). Its pathway is cofactor biosynthesis; coenzyme A biosynthesis; CoA from (R)-pantothenate: step 1/5. Functionally, catalyzes the phosphorylation of pantothenate (Pan), the first step in CoA biosynthesis. The sequence is that of Type III pantothenate kinase from Acetivibrio thermocellus (strain ATCC 27405 / DSM 1237 / JCM 9322 / NBRC 103400 / NCIMB 10682 / NRRL B-4536 / VPI 7372) (Clostridium thermocellum).